Here is a 349-residue protein sequence, read N- to C-terminus: Methylthioribose-1-phosphate isomerase (349 aa).

Residues R49–A51, R93, and Q201 contribute to the substrate site. D242 serves as the catalytic Proton donor. A substrate-binding site is contributed by N252–K253.

The protein belongs to the EIF-2B alpha/beta/delta subunits family. MtnA subfamily.

It carries out the reaction 5-(methylsulfanyl)-alpha-D-ribose 1-phosphate = 5-(methylsulfanyl)-D-ribulose 1-phosphate. The protein operates within amino-acid biosynthesis; L-methionine biosynthesis via salvage pathway; L-methionine from S-methyl-5-thio-alpha-D-ribose 1-phosphate: step 1/6. Catalyzes the interconversion of methylthioribose-1-phosphate (MTR-1-P) into methylthioribulose-1-phosphate (MTRu-1-P). This is Methylthioribose-1-phosphate isomerase from Petrotoga mobilis (strain DSM 10674 / SJ95).